A 283-amino-acid chain; its full sequence is MKLSAIWESKNGLRGSGTCSHRRVSTPDIQSPDCGEGGIGHALALDFKNQGYVVFTTLLAHEPRDHLTDLGIHSFTADVTKDSDIEQLKEAISSLTEGSLSVLVNNAGICYTMTAIDTDVKEVEKMFGVNVFGPMRMVHIFHPLLIKARGKIVNIGSELTDFEASYNATKAALHHWGNTLRVEMKPLGVEVVNVISGEVGTNILKRDHNRKLPEDSFYRPLEKEFMNHVTRTPRTTTPAEYSRSVVIEVMKQHSTAWFWTGASSGIVRFSEQFFPRTLWVNSL.

7 residues coordinate NADP(+): Thr-57, Asp-78, Asn-106, Tyr-166, Lys-170, Val-199, and Thr-201. Tyr-166 serves as the catalytic Proton acceptor. The active-site Proton donor is Tyr-166. The active-site Lowers pKa of active site Tyr is the Lys-170.

Belongs to the short-chain dehydrogenases/reductases (SDR) family.

It participates in secondary metabolite biosynthesis. Its function is as follows. Highly reducing polyketide synthase; part of the gene cluster that mediates the biosynthesis of annullatin D, an alkylated aromatic polyketide with a fused dihydrobenzofuran lactone ring system that exhibits potent agonistic activities toward the cannabinoid receptors. The annullatin backbone 2-hydroxymethyl-3-pentylphenol is assembled from one acetyl-CoA starter unit and 5 malonyl-CoA elongation units by cooperation of the highly reducing polyketide synthase anuA, the short-chain dehydrogenase anuB and the oxidoreductase anuC, before being hydroxylated at the C-5 alkyl chain by the cytochrome P450 monooxygenase anuE to form (8S)-annullatin E. The prenyltransferase anuH subsequently installs one isoprenyl group at the benzene ring to form (8S)-annullatin J. Enzymatic or nonenzymatic dihydro-benzofuran ring formation between the prenyl and the phenolic hydroxyl groups in (8S)-annullatin J results in two diastereomers (2S,9S)-annullatin H and compound 12. The intermediate (2S,9S)-annullatin H is then converted to (2S,9S)-annullatin D by the FAD-linked oxidoreductase anuG-catalyzed five-member lactone ring formation. The isomer 12 acts as a substrate for the short-chain dehydrogenase anuF and is oxidized to (2R)-annullatin F, which is subsequently acetylated by an acetyltransferase leading to (2R)-annullatin G formation. The remaining enzymes identified within the cluster, anuD, anuI and anuJ, seem not to be involved in annullatin biosynthesis. This Penicillium roqueforti (strain FM164) protein is Short-chain dehydrogenase anuB.